The primary structure comprises 2128 residues: Spectrin beta chain, erythrocytic (2128 aa).

Polar residues predominate over residues 1 to 15; that stretch reads MTSATEFENVGNQPP. Residues 1 to 30 form a disordered region; the sequence is MTSATEFENVGNQPPFSRINARWDAPDDEL. An actin-binding region spans residues 2–275; it reads TSATEFENVG…IITYVVAFYH (274 aa). S36 bears the Phosphoserine mark. Calponin-homology (CH) domains lie at 54–158 and 173–278; these read VVQK…LRFQ and RSAK…HYFS. The residue at position 104 (T104) is a Phosphothreonine. Spectrin repeat units lie at residues 303-411, 416-517, 521-627, 630-733, 736-838, 845-942, 950-1050, 1054-1157, 1162-1250, 1267-1368, 1381-1455, 1473-1574, 1576-1680, 1682-1784, 1789-1890, 1897-1997, and 2004-2064; these read MIEK…LALR, RQEF…QRLE, ALQK…QLEQ, RLWK…DLQD, NFFQ…KLQE, VFGE…REAV, NYCV…LSLG, KLQA…NTLT, FQEF…RHKK, ELQN…EQLS, ADLN…FLDL, LQIS…RLRD, HEAQ…RLEN, YHLF…MQLL, DLHR…RAQL, FRFF…DRLH, and QFSR…KPTT. A Phosphoserine modification is found at S1289. At S2034 the chain carries Phosphoserine. A disordered region spans residues 2062–2108; it reads PTTLELKERQTPERPTEEPGPQEEEGETAGEAPQVHHAATERTSPVS. Phosphothreonine occurs at positions 2064, 2072, and 2101. The span at 2066–2078 shows a compositional bias: basic and acidic residues; the sequence is ELKERQTPERPTE. Residues S2105, S2108, S2114, S2116, and S2119 each carry the phosphoserine modification.

The protein belongs to the spectrin family. As to quaternary structure, composed of nonhomologous chains, alpha and beta, which aggregate to form dimers, tetramers, and higher polymers. Interacts with BCAM.

The protein resides in the cytoplasm. It localises to the cytoskeleton. The protein localises to the cell cortex. Spectrin is the major constituent of the cytoskeletal network underlying the erythrocyte plasma membrane. It associates with band 4.1 and actin to form the cytoskeletal superstructure of the erythrocyte plasma membrane. The polypeptide is Spectrin beta chain, erythrocytic (Sptb) (Mus musculus (Mouse)).